Here is a 1465-residue protein sequence, read N- to C-terminus: Claspin (1465 aa).

Residues 1–12 (MSESLAETAAAA) show a composition bias toward low complexity. Disordered stretches follow at residues 1–490 (MSES…KAKV), 544–566 (ATAL…GLRM), and 585–636 (ATEF…TEDM). Residues S45, S49, S52, S64, S75, S109, and S114 each carry the phosphoserine modification. Over residues 121 to 133 (QAEKKTQKEEGKQ) the composition is skewed to basic and acidic residues. Basic residues predominate over residues 154–163 (KSNKTKKAVK). Basic and acidic residues predominate over residues 205–216 (EYDHHQQHEKPA). Over residues 217–228 (KTQKSKKLAKKQ) the composition is skewed to basic residues. 4 stretches are compositionally biased toward basic and acidic residues: residues 229–246 (KQQE…EKKK), 254–263 (KKSDKSKIDS), 273–286 (EDLK…EPQK), and 296–335 (TNKD…EQIV). A coiled-coil region spans residues 260–281 (KIDSLMDNEEDAGEDLKMYQED). The segment covering 336–346 (KPKKMAKKNKQ) has biased composition (basic residues). S350 and S354 each carry phosphoserine. The segment covering 358-373 (QNEKVDQDHDLKKMSS) has biased composition (basic and acidic residues). A compositionally biased stretch (acidic residues) spans 375 to 388 (NELEMGSDKEDQEM). Residues S381, S404, S406, S432, S434, S444, S456, S458, and S468 each carry the phosphoserine modification. The span at 400-417 (QRMDSESEDEIPKTESEK) shows a compositional bias: basic and acidic residues. Residues 432–441 (SESEPEETAE) show a composition bias toward acidic residues. Residues 456–470 (SESEPELDNPEESAG) are compositionally biased toward acidic residues. Residues 564–587 (LRMTREELEAYAKLMEDRAKEATE) adopt a coiled-coil conformation. The segment covering 594–606 (ESDEEDDSENEEP) has biased composition (acidic residues). T693 bears the Phosphothreonine mark. Residues 839 to 874 (LITKKRMEDLRKKQAEEQEKMAEDEEEGMDVDEEYE) adopt a coiled-coil conformation. The span at 845 to 859 (MEDLRKKQAEEQEKM) shows a compositional bias: basic and acidic residues. The interval 845–977 (MEDLRKKQAE…LDLLQTPKPS (133 aa)) is disordered. Composition is skewed to acidic residues over residues 860–875 (AEDE…EYEP), 913–942 (ADED…EANP), and 960–969 (DDNSDEDDLD). At S963 the chain carries Phosphoserine. T973 is modified (phosphothreonine). S990 carries the post-translational modification Phosphoserine. Residues 1058–1154 (CSGTFATQLP…AEPVEEIPET (97 aa)) are disordered. Residues 1067 to 1076 (PSQAPTQQPE) are compositionally biased toward low complexity. Phosphoserine occurs at positions 1093 and 1094. Residues 1094–1103 (SDEEAQEDAL) show a composition bias toward acidic residues. Over residues 1109–1123 (RNKKLTKKRPKKKAK) the composition is skewed to basic residues. Acidic residues predominate over residues 1127-1154 (SDDEDSDDEVEEFDEESDAEPVEEIPET). A Phosphoserine modification is found at S1287.

The protein belongs to the claspin family. In terms of processing, phosphorylated in response to DNA damage by IR and HU treatment. Phosphorylation does not require mei-41 or tefu. In terms of tissue distribution, detected in the ovary but not in the testis (at protein level).

It is found in the nucleus. Functionally, required for checkpoint signaling in response to DNA replication stress; either resulting from normal embryogenesis or induced by the DNA synthesis inhibitor hydroxyurea (HU). It is not required for the G2 arrest resulting from DNA double strand breaks induced by ionizing irradiation (IR). Necessary for the timely phosphorylation of Cdk1 at the mid-blastula transition. May have a minor role in maintaining genomic stability in mitotic cells. In Drosophila melanogaster (Fruit fly), this protein is Claspin.